A 438-amino-acid chain; its full sequence is Histidinol dehydrogenase (438 aa).

NAD(+) contacts are provided by Tyr129, Gln193, and Asn216. 3 residues coordinate substrate: Thr239, Gln261, and His264. Zn(2+)-binding residues include Gln261 and His264. Active-site proton acceptor residues include Glu330 and His331. Substrate is bound by residues His331, Asp364, Glu418, and His423. Asp364 serves as a coordination point for Zn(2+). His423 serves as a coordination point for Zn(2+).

Belongs to the histidinol dehydrogenase family. Zn(2+) is required as a cofactor.

The catalysed reaction is L-histidinol + 2 NAD(+) + H2O = L-histidine + 2 NADH + 3 H(+). It functions in the pathway amino-acid biosynthesis; L-histidine biosynthesis; L-histidine from 5-phospho-alpha-D-ribose 1-diphosphate: step 9/9. In terms of biological role, catalyzes the sequential NAD-dependent oxidations of L-histidinol to L-histidinaldehyde and then to L-histidine. This Thermobifida fusca (strain YX) protein is Histidinol dehydrogenase.